Reading from the N-terminus, the 283-residue chain is Pantothenate synthetase (283 aa).

ATP is bound at residue 30–37 (MGALHEGH). Histidine 37 acts as the Proton donor in catalysis. Glutamine 61 serves as a coordination point for (R)-pantoate. Position 61 (glutamine 61) interacts with beta-alanine. 147–150 (GMKD) is a binding site for ATP. Position 153 (glutamine 153) interacts with (R)-pantoate. Residues valine 176 and 184–187 (LSSR) each bind ATP.

The protein belongs to the pantothenate synthetase family. As to quaternary structure, homodimer.

Its subcellular location is the cytoplasm. The catalysed reaction is (R)-pantoate + beta-alanine + ATP = (R)-pantothenate + AMP + diphosphate + H(+). It functions in the pathway cofactor biosynthesis; (R)-pantothenate biosynthesis; (R)-pantothenate from (R)-pantoate and beta-alanine: step 1/1. In terms of biological role, catalyzes the condensation of pantoate with beta-alanine in an ATP-dependent reaction via a pantoyl-adenylate intermediate. The chain is Pantothenate synthetase from Endomicrobium trichonymphae.